Consider the following 426-residue polypeptide: Pyrophosphate--fructose 6-phosphate 1-phosphotransferase 2 (426 aa).

Gly-15 provides a ligand contact to diphosphate. Asp-114 serves as a coordination point for Mg(2+). Residues 140–142 (TID), 186–188 (MGR), Glu-247, and 308–311 (YELR) each bind substrate. The active-site Proton acceptor is the Asp-142.

Belongs to the phosphofructokinase type A (PFKA) family. PPi-dependent PFK group II subfamily. Clade 'Short' sub-subfamily. As to quaternary structure, homotetramer. Mg(2+) is required as a cofactor.

The protein localises to the cytoplasm. The catalysed reaction is beta-D-fructose 6-phosphate + diphosphate = beta-D-fructose 1,6-bisphosphate + phosphate + H(+). Its pathway is carbohydrate degradation; glycolysis; D-glyceraldehyde 3-phosphate and glycerone phosphate from D-glucose: step 3/4. Non-allosteric. Its function is as follows. Catalyzes the phosphorylation of D-fructose 6-phosphate, the first committing step of glycolysis. Uses inorganic phosphate (PPi) as phosphoryl donor instead of ATP like common ATP-dependent phosphofructokinases (ATP-PFKs), which renders the reaction reversible, and can thus function both in glycolysis and gluconeogenesis. Consistently, PPi-PFK can replace the enzymes of both the forward (ATP-PFK) and reverse (fructose-bisphosphatase (FBPase)) reactions. This is Pyrophosphate--fructose 6-phosphate 1-phosphotransferase 2 (pfk2) from Trichomonas vaginalis (strain ATCC PRA-98 / G3).